The chain runs to 39 residues: Ribonuclease UK114 (39 aa).

It belongs to the RutC family. In terms of assembly, monomer. The N-terminus may be blocked. In terms of tissue distribution, mainly expressed in the liver and kidney. Lower expression found in intestine, gizzard, glandular stomach, heart, brain and spleen.

The protein resides in the cytoplasm. Its function is as follows. Endoribonuclease responsible for the inhibition of the translation by cleaving mRNA. Inhibits cell-free protein synthesis. Cleaves phosphodiester bonds only in single-stranded RNA. In Gallus gallus (Chicken), this protein is Ribonuclease UK114.